Here is a 131-residue protein sequence, read N- to C-terminus: NADPH-dependent 7-cyano-7-deazaguanine reductase (131 aa).

The Thioimide intermediate role is filled by C47. Catalysis depends on D54, which acts as the Proton donor. Substrate-binding positions include 69-71 (MEL) and 88-89 (HE).

The protein belongs to the GTP cyclohydrolase I family. QueF type 1 subfamily.

The protein localises to the cytoplasm. It carries out the reaction 7-aminomethyl-7-carbaguanine + 2 NADP(+) = 7-cyano-7-deazaguanine + 2 NADPH + 3 H(+). It functions in the pathway tRNA modification; tRNA-queuosine biosynthesis. Functionally, catalyzes the NADPH-dependent reduction of 7-cyano-7-deazaguanine (preQ0) to 7-aminomethyl-7-deazaguanine (preQ1). This is NADPH-dependent 7-cyano-7-deazaguanine reductase from Microcystis aeruginosa (strain NIES-843 / IAM M-2473).